Consider the following 194-residue polypeptide: Adenylate kinase (194 aa).

10-15 is an ATP binding site; that stretch reads GAGKGT. The interval 30–59 is NMP; the sequence is STGDMLRAAVKAETEIGKKAKAVMDAGELV. Residues Thr-31, Arg-36, 57–59, 85–88, and Gln-92 contribute to the AMP site; these read ELV and GYPR. Residues 126–142 form an LID region; sequence KRAEDAQAAGQPVRRDD. Residue Arg-127 participates in ATP binding. AMP contacts are provided by Arg-139 and Arg-150. Ala-178 contributes to the ATP binding site.

It belongs to the adenylate kinase family. In terms of assembly, monomer.

The protein resides in the cytoplasm. It catalyses the reaction AMP + ATP = 2 ADP. It participates in purine metabolism; AMP biosynthesis via salvage pathway; AMP from ADP: step 1/1. Catalyzes the reversible transfer of the terminal phosphate group between ATP and AMP. Plays an important role in cellular energy homeostasis and in adenine nucleotide metabolism. This is Adenylate kinase from Chelativorans sp. (strain BNC1).